Reading from the N-terminus, the 340-residue chain is Ketol-acid reductoisomerase (NADP(+)) (340 aa).

Residues 3 to 182 (VTMYYEEDVE…GCARVGIIET (180 aa)) enclose the KARI N-terminal Rossmann domain. Residues 26–29 (YGSQ), arginine 49, serine 53, and 83–86 (DELQ) each bind NADP(+). Residue histidine 108 is part of the active site. Glycine 134 lines the NADP(+) pocket. Residues 183–328 (TFKEETEEDL…AELRKAMPFT (146 aa)) enclose the KARI C-terminal knotted domain. Mg(2+) contacts are provided by aspartate 191, glutamate 195, glutamate 227, and glutamate 231. Serine 252 serves as a coordination point for substrate.

It belongs to the ketol-acid reductoisomerase family. Requires Mg(2+) as cofactor.

The catalysed reaction is (2R)-2,3-dihydroxy-3-methylbutanoate + NADP(+) = (2S)-2-acetolactate + NADPH + H(+). It catalyses the reaction (2R,3R)-2,3-dihydroxy-3-methylpentanoate + NADP(+) = (S)-2-ethyl-2-hydroxy-3-oxobutanoate + NADPH + H(+). It functions in the pathway amino-acid biosynthesis; L-isoleucine biosynthesis; L-isoleucine from 2-oxobutanoate: step 2/4. It participates in amino-acid biosynthesis; L-valine biosynthesis; L-valine from pyruvate: step 2/4. Involved in the biosynthesis of branched-chain amino acids (BCAA). Catalyzes an alkyl-migration followed by a ketol-acid reduction of (S)-2-acetolactate (S2AL) to yield (R)-2,3-dihydroxy-isovalerate. In the isomerase reaction, S2AL is rearranged via a Mg-dependent methyl migration to produce 3-hydroxy-3-methyl-2-ketobutyrate (HMKB). In the reductase reaction, this 2-ketoacid undergoes a metal-dependent reduction by NADPH to yield (R)-2,3-dihydroxy-isovalerate. The chain is Ketol-acid reductoisomerase (NADP(+)) from Lactococcus lactis subsp. cremoris (strain SK11).